The sequence spans 98 residues: UPF0358 protein LCA_1078 (98 aa).

Belongs to the UPF0358 family.

This chain is UPF0358 protein LCA_1078, found in Latilactobacillus sakei subsp. sakei (strain 23K) (Lactobacillus sakei subsp. sakei).